A 369-amino-acid chain; its full sequence is Chaperone protein DnaJ (369 aa).

The J domain occupies 7 to 73; that stretch reads DYYEILGVPR…QKRAMYDRFG (67 aa). The CR-type zinc-finger motif lies at 143–225; sequence GAEIPVEYER…CGGSGRVLRK (83 aa). Zn(2+) is bound by residues C156, C159, C173, C176, C199, C202, C213, and C216. CXXCXGXG motif repeat units follow at residues 156–163, 173–180, 199–206, and 213–220; these read CPRCGGTG, CPSCGGTG, CERCGGTG, and CHECGGSG.

It belongs to the DnaJ family. Homodimer. Zn(2+) serves as cofactor.

It localises to the cytoplasm. Its function is as follows. Participates actively in the response to hyperosmotic and heat shock by preventing the aggregation of stress-denatured proteins and by disaggregating proteins, also in an autonomous, DnaK-independent fashion. Unfolded proteins bind initially to DnaJ; upon interaction with the DnaJ-bound protein, DnaK hydrolyzes its bound ATP, resulting in the formation of a stable complex. GrpE releases ADP from DnaK; ATP binding to DnaK triggers the release of the substrate protein, thus completing the reaction cycle. Several rounds of ATP-dependent interactions between DnaJ, DnaK and GrpE are required for fully efficient folding. Also involved, together with DnaK and GrpE, in the DNA replication of plasmids through activation of initiation proteins. This Thermotoga maritima (strain ATCC 43589 / DSM 3109 / JCM 10099 / NBRC 100826 / MSB8) protein is Chaperone protein DnaJ.